The sequence spans 372 residues: Forkhead box protein F1-B (372 aa).

The tract at residues 1 to 51 is disordered; sequence MTAEIQQPPSQPPAQSSPMSAATDKHGGQPSAMESASCATKTKKTNAGIRR. Residues 13–22 are compositionally biased toward low complexity; the sequence is PAQSSPMSAA. Residues 54–148 constitute a DNA-binding region (fork-head); the sequence is KPPYSYIALI…EEGSFRRRPR (95 aa).

At the late gastrula stage, expressed in the presumptive ventrolateral mesoderm. During neurulation and tailbud stages, expressed in the lateral plate mesoderm and in the neural crest-derived structures of the head and branchial arches. During tailbud stages, expressed in the pronephros and pronephros ducts and in cells that migrate from the dorsolateral plate to the ventral region of the embryo (with the notable exception of the heart). These cells may represent hematopoietic or endothelial progenitor cells.

It localises to the nucleus. Functionally, probable transcription factor. Required for smooth muscle (visceral mesoderm) differentiation during gut development. Also required for normal proliferation of the lateral plate mesoderm. Acts as a downstream mediator of bmp4-signaling. In Xenopus laevis (African clawed frog), this protein is Forkhead box protein F1-B (foxf1-b).